An 876-amino-acid chain; its full sequence is Ergothioneine biosynthesis protein 1 (876 aa).

The L-histidine N(alpha)-methyltransferase stretch occupies residues 36 to 350; it reads IIDIRRVAVE…TYGNEYGLHL (315 aa). Tyrosine 88 contributes to the L-histidine binding site. Residues glycine 119, lysine 125, and aspartate 146 each contribute to the S-adenosyl-L-methionine site. L-histidine contacts are provided by residues asparagine 202, tyrosine 242, and 315-317; that span reads EQS. Positions 378–874 are hercynylcysteine S-oxide synthase; that stretch reads ALWATWDVVT…YAWVGARVVR (497 aa). Residues histidine 413, histidine 506, and histidine 510 each contribute to the Fe cation site. Disordered stretches follow at residues 631–650 and 732–761; these read GTTN…QQLP and TNNG…SNTT. Residues 744 to 758 show a composition bias toward low complexity; sequence PSSETPAESSSPSDS.

It in the N-terminal section; belongs to the methyltransferase superfamily. EgtD family. In the C-terminal section; belongs to the EgtB family. Requires Fe(2+) as cofactor.

The protein localises to the cytoplasm. Its subcellular location is the nucleus. The catalysed reaction is L-histidine + 3 S-adenosyl-L-methionine = hercynine + 3 S-adenosyl-L-homocysteine + 3 H(+). It catalyses the reaction hercynine + L-cysteine + O2 = S-(hercyn-2-yl)-L-cysteine S-oxide + H2O. It functions in the pathway amino-acid biosynthesis; ergothioneine biosynthesis. Functionally, catalyzes the SAM-dependent triple methylation of the alpha-amino group of histidine to form hercynine and subsequent conjugation with cysteine and oxygen to form hercynylcysteine sulfoxide, the first two steps in the biosynthesis pathway of ergothioneine. Ergothioneine is an unusual thio-histidine betaine amino acid that acts as an antioxidant against peroxide in conidia and contributes to conidial longevity. This chain is Ergothioneine biosynthesis protein 1, found in Neurospora crassa (strain ATCC 24698 / 74-OR23-1A / CBS 708.71 / DSM 1257 / FGSC 987).